The chain runs to 126 residues: Aspartate 1-decarboxylase (126 aa).

Serine 25 functions as the Schiff-base intermediate with substrate; via pyruvic acid in the catalytic mechanism. Serine 25 carries the pyruvic acid (Ser) modification. Threonine 57 lines the substrate pocket. Tyrosine 58 (proton donor) is an active-site residue. Position 73–75 (73–75 (GGA)) interacts with substrate.

The protein belongs to the PanD family. In terms of assembly, heterooctamer of four alpha and four beta subunits. It depends on pyruvate as a cofactor. Post-translationally, is synthesized initially as an inactive proenzyme, which is activated by self-cleavage at a specific serine bond to produce a beta-subunit with a hydroxyl group at its C-terminus and an alpha-subunit with a pyruvoyl group at its N-terminus.

It is found in the cytoplasm. It carries out the reaction L-aspartate + H(+) = beta-alanine + CO2. The protein operates within cofactor biosynthesis; (R)-pantothenate biosynthesis; beta-alanine from L-aspartate: step 1/1. In terms of biological role, catalyzes the pyruvoyl-dependent decarboxylation of aspartate to produce beta-alanine. The sequence is that of Aspartate 1-decarboxylase from Xylella fastidiosa (strain 9a5c).